Reading from the N-terminus, the 51-residue chain is Large ribosomal subunit protein eL39 (51 aa).

The protein belongs to the eukaryotic ribosomal protein eL39 family. In terms of assembly, interacts with IMPACT.

The sequence is that of Large ribosomal subunit protein eL39 (RPL39) from Gallus gallus (Chicken).